The primary structure comprises 458 residues: Argininosuccinate lyase (458 aa).

This sequence belongs to the lyase 1 family. Argininosuccinate lyase subfamily.

The protein localises to the cytoplasm. The enzyme catalyses 2-(N(omega)-L-arginino)succinate = fumarate + L-arginine. It functions in the pathway amino-acid biosynthesis; L-arginine biosynthesis; L-arginine from L-ornithine and carbamoyl phosphate: step 3/3. In Bacillus velezensis (strain DSM 23117 / BGSC 10A6 / LMG 26770 / FZB42) (Bacillus amyloliquefaciens subsp. plantarum), this protein is Argininosuccinate lyase.